The primary structure comprises 101 residues: Putative regulatory protein PrgT (101 aa).

Its function is as follows. Might be involved in the expression of prgA, but is not required for activation of the expression of prgB. This is Putative regulatory protein PrgT (prgT) from Enterococcus faecalis (strain ATCC 47077 / OG1RF).